Reading from the N-terminus, the 165-residue chain is Protein OPG091 (165 aa).

This sequence belongs to the orthopoxvirus OPG091 family.

It is found in the virion. The protein resides in the host cytoplasm. Its function is as follows. Contributes to vaccinia virus virulence in mice but not to replication in cell culture. The chain is Protein OPG091 (OPG091) from Vaccinia virus (strain Western Reserve) (VACV).